The sequence spans 485 residues: Telomeric DNA-binding factor trf1 (485 aa).

Over residues 1-20 the composition is skewed to basic and acidic residues; it reads MSKRSLDPSDDFKGQKRLAI. The disordered stretch occupies residues 1-23; the sequence is MSKRSLDPSDDFKGQKRLAIDPE. Positions 400–457 constitute an HTH myb-type domain; it reads RRVANRRSWTKEEEEALLDGLDLVKGPRWSQILELYGPGGKKSEVLKYRNQVQLKDKA. The segment at residues 428 to 453 is a DNA-binding region (H-T-H motif); the sequence is WSQILELYGPGGKKSEVLKYRNQVQL.

Homodimer.

It is found in the nucleus. Its function is as follows. Binds the telomeric double-stranded TTACAGG repeat and regulates telomere length. The sequence is that of Telomeric DNA-binding factor trf1 (trf1) from Schizosaccharomyces pombe (strain 972 / ATCC 24843) (Fission yeast).